The primary structure comprises 409 residues: Histidine--tRNA ligase (409 aa).

Belongs to the class-II aminoacyl-tRNA synthetase family.

The protein resides in the cytoplasm. It carries out the reaction tRNA(His) + L-histidine + ATP = L-histidyl-tRNA(His) + AMP + diphosphate + H(+). The chain is Histidine--tRNA ligase from Methanosphaerula palustris (strain ATCC BAA-1556 / DSM 19958 / E1-9c).